We begin with the raw amino-acid sequence, 225 residues long: Single-pass membrane and coiled-coil domain-containing protein 3 (225 aa).

Residues 69-92 (IIQAMTKIQKELQKIDEALKDQLE) are a coiled coil. Residues 155–175 (IGTSLLGSIGVAVLSLGIDMI) form a helical membrane-spanning segment. Residues 182 to 209 (AVERTQLQAAIKSYEKHLEEFKAASAKY) adopt a coiled-coil conformation.

It is found in the membrane. In Mus musculus (Mouse), this protein is Single-pass membrane and coiled-coil domain-containing protein 3 (Smco3).